The primary structure comprises 375 residues: 4-hydroxy-3-methylbut-2-en-1-yl diphosphate synthase (flavodoxin) (375 aa).

[4Fe-4S] cluster contacts are provided by Cys-270, Cys-273, Cys-305, and Glu-312.

Belongs to the IspG family. [4Fe-4S] cluster is required as a cofactor.

The catalysed reaction is (2E)-4-hydroxy-3-methylbut-2-enyl diphosphate + oxidized [flavodoxin] + H2O + 2 H(+) = 2-C-methyl-D-erythritol 2,4-cyclic diphosphate + reduced [flavodoxin]. The protein operates within isoprenoid biosynthesis; isopentenyl diphosphate biosynthesis via DXP pathway; isopentenyl diphosphate from 1-deoxy-D-xylulose 5-phosphate: step 5/6. In terms of biological role, converts 2C-methyl-D-erythritol 2,4-cyclodiphosphate (ME-2,4cPP) into 1-hydroxy-2-methyl-2-(E)-butenyl 4-diphosphate. This chain is 4-hydroxy-3-methylbut-2-en-1-yl diphosphate synthase (flavodoxin), found in Shigella flexneri serotype 5b (strain 8401).